Consider the following 333-residue polypeptide: Glycerol-3-phosphate dehydrogenase [NAD(P)+] 2 (333 aa).

Residues Ser-12, Trp-13, Arg-32, and Lys-106 each contribute to the NADPH site. Residues Lys-106 and Gly-134 each contribute to the sn-glycerol 3-phosphate site. Ala-138 provides a ligand contact to NADPH. The sn-glycerol 3-phosphate site is built by Lys-189, Asp-242, Ser-252, Arg-253, and Asn-254. Residue Lys-189 is the Proton acceptor of the active site. Position 253 (Arg-253) interacts with NADPH. Positions 277 and 279 each coordinate NADPH.

This sequence belongs to the NAD-dependent glycerol-3-phosphate dehydrogenase family.

It is found in the cytoplasm. It carries out the reaction sn-glycerol 3-phosphate + NAD(+) = dihydroxyacetone phosphate + NADH + H(+). The enzyme catalyses sn-glycerol 3-phosphate + NADP(+) = dihydroxyacetone phosphate + NADPH + H(+). It participates in membrane lipid metabolism; glycerophospholipid metabolism. In terms of biological role, catalyzes the reduction of the glycolytic intermediate dihydroxyacetone phosphate (DHAP) to sn-glycerol 3-phosphate (G3P), the key precursor for phospholipid synthesis. The chain is Glycerol-3-phosphate dehydrogenase [NAD(P)+] 2 from Sphingopyxis alaskensis (strain DSM 13593 / LMG 18877 / RB2256) (Sphingomonas alaskensis).